Reading from the N-terminus, the 293-residue chain is MFTGSMVAIITPFDREGRFDEETFRKLIDFQIENGTDVIVPCGTTGESATLDHAEHKKVIKTCIEQVNKRVPVLAGTGSNATSEAIELTRDAKKMGADGALLISPYYNKPSQEGVYRHFKAIADNVALPQVLYNVPGRTGMNMTAATTIRLASHPNVVGIKEASGDLTQASTIIAEAGDQINVISGDDFLTLPMMACGGKGVISVTANILPGEVKAMVTAVNENRYADAKKIHLNLLNLHQAMFIETNPVPVKVAAALMGLCGDHLRLPLVELLPENLASLKKVLSGYGLIQA.

Pyruvate is bound at residue T45. Y133 functions as the Proton donor/acceptor in the catalytic mechanism. The active-site Schiff-base intermediate with substrate is the K161. Pyruvate is bound at residue I203.

The protein belongs to the DapA family. As to quaternary structure, homotetramer; dimer of dimers.

It localises to the cytoplasm. It catalyses the reaction L-aspartate 4-semialdehyde + pyruvate = (2S,4S)-4-hydroxy-2,3,4,5-tetrahydrodipicolinate + H2O + H(+). It participates in amino-acid biosynthesis; L-lysine biosynthesis via DAP pathway; (S)-tetrahydrodipicolinate from L-aspartate: step 3/4. In terms of biological role, catalyzes the condensation of (S)-aspartate-beta-semialdehyde [(S)-ASA] and pyruvate to 4-hydroxy-tetrahydrodipicolinate (HTPA). This chain is 4-hydroxy-tetrahydrodipicolinate synthase, found in Syntrophotalea carbinolica (strain DSM 2380 / NBRC 103641 / GraBd1) (Pelobacter carbinolicus).